The primary structure comprises 127 residues: Major sperm protein 77/79 (127 aa).

Position 2 is an N-acetylalanine (A2). In terms of domain architecture, MSP spans 9–126; the sequence is DIQTQPGTKI…RRKNLPIEYN (118 aa).

As to expression, sperm.

The protein localises to the cell projection. It localises to the pseudopodium. Its subcellular location is the cytoplasm. The protein resides in the cytoskeleton. Central component in molecular interactions underlying sperm crawling. Forms an extensive filament system that extends from sperm villipoda, along the leading edge of the pseudopod. The protein is Major sperm protein 77/79 (msp-77) of Caenorhabditis elegans.